A 476-amino-acid polypeptide reads, in one-letter code: Cytosolic iron-sulfur assembly component 3 (476 aa).

Residue Ala-2 is modified to N-acetylalanine. 8 residues coordinate [4Fe-4S] cluster: Cys-24, Cys-71, Cys-74, Cys-77, Cys-190, Cys-246, Cys-395, and Cys-399.

This sequence belongs to the NARF family. External component of the CIA complex. In the CIA complex, interacts directly with CIAO1 and MMS19.

In terms of biological role, component of the cytosolic iron-sulfur protein assembly (CIA) complex, a multiprotein complex that mediates the incorporation of iron-sulfur cluster into extramitochondrial Fe/S proteins. Seems to negatively regulate the level of HIF1A expression, although this effect could be indirect. The polypeptide is Cytosolic iron-sulfur assembly component 3 (Pongo abelii (Sumatran orangutan)).